The chain runs to 103 residues: ATP synthase F(0) complex subunit g, mitochondrial (103 aa).

The residue at position 2 (Ala2) is an N-acetylalanine. 4 positions are modified to N6-acetyllysine: Lys11, Lys24, Lys35, and Lys54.

It belongs to the ATPase g subunit family. As to quaternary structure, component of the ATP synthase complex composed at least of ATP5F1A/subunit alpha, ATP5F1B/subunit beta, ATP5MC1/subunit c (homooctomer), MT-ATP6/subunit a, MT-ATP8/subunit 8, ATP5ME/subunit e, ATP5MF/subunit f, ATP5MG/subunit g, ATP5MK/subunit k, ATP5MJ/subunit j, ATP5F1C/subunit gamma, ATP5F1D/subunit delta, ATP5F1E/subunit epsilon, ATP5PF/subunit F6, ATP5PB/subunit b, ATP5PD/subunit d, ATP5PO/subunit OSCP. ATP synthase complex consists of a soluble F(1) head domain (subunits alpha(3) and beta(3)) - the catalytic core - and a membrane F(0) domain - the membrane proton channel (subunits c, a, 8, e, f, g, k and j). These two domains are linked by a central stalk (subunits gamma, delta, and epsilon) rotating inside the F1 region and a stationary peripheral stalk (subunits F6, b, d, and OSCP).

Its subcellular location is the mitochondrion. It is found in the mitochondrion inner membrane. Subunit g, of the mitochondrial membrane ATP synthase complex (F(1)F(0) ATP synthase or Complex V) that produces ATP from ADP in the presence of a proton gradient across the membrane which is generated by electron transport complexes of the respiratory chain. ATP synthase complex consist of a soluble F(1) head domain - the catalytic core - and a membrane F(1) domain - the membrane proton channel. These two domains are linked by a central stalk rotating inside the F(1) region and a stationary peripheral stalk. During catalysis, ATP synthesis in the catalytic domain of F(1) is coupled via a rotary mechanism of the central stalk subunits to proton translocation. In vivo, can only synthesize ATP although its ATP hydrolase activity can be activated artificially in vitro. Part of the complex F(0) domain. The protein is ATP synthase F(0) complex subunit g, mitochondrial of Mus musculus (Mouse).